A 755-amino-acid chain; its full sequence is Kelch-like protein 5 (755 aa).

Residues 152-184 (LDRPEVDDGTSEEENESDSSSCRTSNSSQTLSS) form a disordered region. Acidic residues predominate over residues 158 to 168 (DDGTSEEENES). The segment covering 169–184 (DSSSCRTSNSSQTLSS) has biased composition (low complexity). A BTB domain is found at 220-287 (CDVILVAGDR…AYTGRLELKE (68 aa)). Kelch repeat units follow at residues 468-514 (TLFA…VLDD), 515-561 (KLYV…VLEG), 563-608 (MYAV…VLSG), 609-655 (KLYA…TWNG), 657-708 (LYAI…LLGD), and 709-754 (KLYA…VTVK).

As to expression, expressed in adrenal gland, ovary and thyroid gland and less abundantly in lymph node, prostate, spinal cord, testis and trachea.

It is found in the cytoplasm. Its subcellular location is the cytoskeleton. This chain is Kelch-like protein 5 (KLHL5), found in Homo sapiens (Human).